The chain runs to 419 residues: Homeobox-containing protein 1 (419 aa).

Residues 18–49 (DEPRFTIEQIDLLQRLRRTGMTKHEILHALET) form the HNF-p1 domain. The disordered stretch occupies residues 56–152 (EHSDKFGRRS…GQRSYSFEAS (97 aa)). Lys60 is covalently cross-linked (Glycyl lysine isopeptide (Lys-Gly) (interchain with G-Cter in SUMO2)). Low complexity-rich tracts occupy residues 64–73 (RSSYGGSSYG) and 81–93 (ASSS…TQTQ). Residues 94–132 (HSGMSPSPSNSYDTSPLPCTTNQNGRENNDRLSTSNGKM) are compositionally biased toward polar residues. Lys131 participates in a covalent cross-link: Glycyl lysine isopeptide (Lys-Gly) (interchain with G-Cter in SUMO2). Residues 145–241 (RSYSFEASEE…PGATLSMRPA (97 aa)) enclose the POU-specific atypical domain. Ser148 bears the Phosphoserine mark. A Glycyl lysine isopeptide (Lys-Gly) (interchain with G-Cter in SUMO2) cross-link involves residue Lys161. Ser170 bears the Phosphoserine mark. Glycyl lysine isopeptide (Lys-Gly) (interchain with G-Cter in SUMO2) cross-links involve residues Lys174, Lys217, and Lys310. The homeobox DNA-binding region spans 267 to 341 (RRGSRFTWRK…NRRKEIKRRA (75 aa)). Residues 352-384 (IDVQSPGGHSNSDDVDGNDYSEQDDSTSHSDHQ) are disordered. Positions 364–376 (DDVDGNDYSEQDD) are enriched in acidic residues. Lys412 is covalently cross-linked (Glycyl lysine isopeptide (Lys-Gly) (interchain with G-Cter in SUMO1); alternate). Residue Lys412 forms a Glycyl lysine isopeptide (Lys-Gly) (interchain with G-Cter in SUMO2); alternate linkage.

In terms of assembly, associates with the telomerase holoenzyme complex. Interacts with DKC1, XRCC6 and COIL.

Its subcellular location is the nucleus. It localises to the cytoplasm. The protein localises to the chromosome. The protein resides in the telomere. It is found in the cajal body. Its subcellular location is the PML body. In terms of biological role, binds directly to 5'-TTAGGG-3' repeats in telomeric DNA. Associates with the telomerase complex at sites of active telomere processing and positively regulates telomere elongation. Important for TERT binding to chromatin, indicating a role in recruitment of the telomerase complex to telomeres. Also plays a role in the alternative lengthening of telomeres (ALT) pathway in telomerase-negative cells where it promotes formation and/or maintenance of ALT-associated promyelocytic leukemia bodies (APBs). Enhances formation of telomere C-circles in ALT cells, suggesting a possible role in telomere recombination. Might also be involved in the DNA damage response at telomeres. This Mus musculus (Mouse) protein is Homeobox-containing protein 1 (Hmbox1).